The sequence spans 300 residues: Cell adhesion molecule CEACAM19 (300 aa).

Positions 1–32 are cleaved as a signal peptide; that stretch reads MEIPMGTQGCFSKSLLLSASILVLWMLQGSQA. At 33-157 the chain is on the extracellular side; that stretch reads ALYIQKIPEQ…PSTHLPTNAG (125 aa). N104 is a glycosylation site (N-linked (GlcNAc...) asparagine). A helical transmembrane segment spans residues 158–178; that stretch reads ILAATIIGSLAAGALLISCIA. The Cytoplasmic segment spans residues 179–300; the sequence is YLLVTRNWRG…APYCQLVPTS (122 aa). The interval 259 to 291 is disordered; that stretch reads SINPARPLPTPPHLQAEPENHQYQQDLLNPDPA.

Belongs to the immunoglobulin superfamily. CEA family. Ubiquitous with highest expression in prostate, uterus, fetal brain, mammary gland, adrenal gland, skeletal muscle, small intestine, and kidney, and lower expression in lung, cerebellum, testis, liver, pancreas, bone marrow and ovary.

The protein resides in the membrane. The polypeptide is Cell adhesion molecule CEACAM19 (Homo sapiens (Human)).